The sequence spans 212 residues: Protein Nef (212 aa).

Residue Gly-2 is the site of N-myristoyl glycine; by host attachment. Ser-6 carries the post-translational modification Phosphoserine; by host. The segment at 67-71 (EESEE) is acidic; interacts with host PACS1 and PACS2; stabilizes the interaction of NEF/MHC-I with host AP1M1; necessary for MHC-I internalization. Residues 75 to 84 (PVRPQVPLRP) form an SH3-binding; interaction with Src family tyrosine kinases region. The short motif at 78–81 (PQVP) is the PxxP; stabilizes the interaction of NEF/MHC-I with host AP1M1; necessary for MHC-I internalization element. Positions 114-130 (EILDLWVYNTQGIFPDW) are mediates dimerization, Nef-PTE1 interaction. The segment at 154–186 (VDPREVEEATEGETNCLLHPVCQHGMEDTEREV) is binding to ATP6V1H. A Dileucine internalization motif; necessary for CD4 internalization motif is present at residues 170–171 (LL). The Diacidic; necessary for CD4 internalization signature appears at 180–181 (ED).

This sequence belongs to the lentivirus primate group Nef protein family. As to quaternary structure, monomer; cytosolic form. Homodimer; membrane bound form. Interacts with Nef associated p21-activated kinase (PAK2); this interaction activates PAK2. Associates with the Nef-MHC-I-AP1 complex; this complex is required for MHC-I internalization. Interacts (via C-terminus) with host PI3-kinase. Interacts with host PACS1; this interaction seems to be weak. Interacts with host PACS2. Interacts with host LCK and MAPK3; these interactions inhibit the kinase activity of the latter. Interacts with host ATP6V1H; this interaction may play a role in CD4 endocytosis. Associates with the CD4-Nef-AP2 complex; this complex is required for CD4 internalization. Interacts with host AP2 subunit alpha and AP2 subunit sigma2. Interacts with TCR-zeta chain; this interaction up-regulates the Fas ligand (FasL) surface expression. Interacts with host HCK, LYN, and SRC; these interactions activate the Src family kinases. Interacts with MAP3K5; this interaction inhibits the Fas and TNFR-mediated death signals. Interacts with beta-COP and PTE1. Interacts with human RACK1; this increases Nef phosphorylation by PKC. Interacts with TP53; this interaction decreases the half-life of TP53, protecting the infected cell against p53-mediated apoptosis. In terms of processing, the virion-associated Nef proteins are cleaved by the viral protease to release the soluble C-terminal core protein. Nef is probably cleaved concomitantly with viral structural proteins on maturation of virus particles. Myristoylated. Post-translationally, phosphorylated on serine residues, probably by host PKCdelta and theta.

It localises to the host cell membrane. Its subcellular location is the virion. It is found in the secreted. The protein localises to the host Golgi apparatus membrane. In terms of biological role, factor of infectivity and pathogenicity, required for optimal virus replication. Alters numerous pathways of T-lymphocyte function and down-regulates immunity surface molecules in order to evade host defense and increase viral infectivity. Alters the functionality of other immunity cells, like dendritic cells, monocytes/macrophages and NK cells. Its function is as follows. In infected CD4(+) T-lymphocytes, down-regulates the surface MHC-I, mature MHC-II, CD4, CD28, CCR5 and CXCR4 molecules. Mediates internalization and degradation of host CD4 through the interaction of with the cytoplasmic tail of CD4, the recruitment of AP-2 (clathrin adapter protein complex 2), internalization through clathrin coated pits, and subsequent transport to endosomes and lysosomes for degradation. Diverts host MHC-I molecules to the trans-Golgi network-associated endosomal compartments by an endocytic pathway to finally target them for degradation. MHC-I down-regulation may involve AP-1 (clathrin adapter protein complex 1) or possibly Src family kinase-ZAP70/Syk-PI3K cascade recruited by PACS2. In consequence infected cells are masked for immune recognition by cytotoxic T-lymphocytes. Decreasing the number of immune receptors also prevents reinfection by more HIV particles (superinfection). Down-regulates host SERINC3 and SERINC5 thereby excluding these proteins from the viral particles. Virion infectivity is drastically higher when SERINC3 or SERINC5 are excluded from the viral envelope, because these host antiviral proteins impair the membrane fusion event necessary for subsequent virion penetration. Functionally, bypasses host T-cell signaling by inducing a transcriptional program nearly identical to that of anti-CD3 cell activation. Interaction with TCR-zeta chain up-regulates the Fas ligand (FasL). Increasing surface FasL molecules and decreasing surface MHC-I molecules on infected CD4(+) cells send attacking cytotoxic CD8+ T-lymphocytes into apoptosis. Plays a role in optimizing the host cell environment for viral replication without causing cell death by apoptosis. Protects the infected cells from apoptosis in order to keep them alive until the next virus generation is ready to strike. Inhibits the Fas and TNFR-mediated death signals by blocking MAP3K5/ASK1. Decreases the half-life of TP53, protecting the infected cell against p53-mediated apoptosis. Inhibits the apoptotic signals regulated by the Bcl-2 family proteins through the formation of a Nef/PI3-kinase/PAK2 complex that leads to activation of PAK2 and induces phosphorylation of host BAD. In terms of biological role, extracellular Nef protein targets CD4(+) T-lymphocytes for apoptosis by interacting with CXCR4 surface receptors. The sequence is that of Protein Nef from Homo sapiens (Human).